The primary structure comprises 1104 residues: Extended synaptotagmin-1 (1104 aa).

Position 1 is an N-acetylmethionine (Met-1). Residues 1–38 (MERSPGEGPSPSPMDQPSAPSDPTDQPPAAHAKPDPGS) are Cytoplasmic-facing. The tract at residues 1-48 (MERSPGEGPSPSPMDQPSAPSDPTDQPPAAHAKPDPGSGGQPAGPGAA) is disordered. Over residues 37-47 (GSGGQPAGPGA) the composition is skewed to gly residues. A helical transmembrane segment spans residues 39–59 (GGQPAGPGAAGEALAVLTSFG). Residues 60–62 (RRL) are Lumenal-facing. The helical transmembrane segment at 63–83 (LVLIPVYLAGAVGLSVGFVLF) threads the bilayer. Topologically, residues 84–1104 (GLALYLGWRR…LMDNKDKGSS (1021 aa)) are cytoplasmic. The stretch at 91 to 116 (WRRVRDEKERSLRAARQLLDDEEQLT) forms a coiled coil. Residues 135–313 (DVEKAEWLNK…LPNRLLVPLV (179 aa)) enclose the SMP-LTD domain. 4 C2 domains span residues 312–433 (LVPD…DDWF), 460–580 (QVLQ…QLSS), 627–751 (SVDA…DEWL), and 777–899 (LEEV…TLSS). Ser-324 carries the post-translational modification Phosphoserine; by CDK5. 8 residues coordinate Ca(2+): Lys-344, Asp-345, Asp-357, Asp-404, Asp-406, Asp-408, Asp-410, and Asp-411. A disordered region spans residues 617 to 641 (VDSENPQRGSSVDAPPRPCHTTPDS). Residue Lys-817 is modified to N6-acetyllysine. Phosphoserine occurs at positions 820 and 941. The segment at 924–950 (SHSYSHSSSSLSEEPELSGGPPHITSS) is disordered. Residues 925–946 (HSYSHSSSSLSEEPELSGGPPH) show a composition bias toward low complexity. A Phosphothreonine modification is found at Thr-948. Phosphoserine occurs at positions 949 and 963. Residues 971–1093 (PLGQVKLTLW…DLSQGVARWY (123 aa)) form the C2 5 domain. At Tyr-1009 the chain carries Phosphotyrosine. The required for phosphatidylinositol 4,5-bisphosphate-dependent location at the cell membrane stretch occupies residues 1018–1025 (KNRGTKRR). Ser-1034 is modified (phosphoserine).

Belongs to the extended synaptotagmin family. Interacts with ESYT2 and ESYT3. Interacts with ADGRD1; inhibiting the G-protein-coupled receptor activity of ADGRD1. Interaction with ADGRD1 is abolished when cytosolic calcium increases, relieving ADGRD1 G-protein-coupled receptor activity. Interacts (phosphorylated form) with SLC2A4. In terms of processing, phosphorylated on Ser residues in insulin-treated adipocytes (in vitro); this promotes interaction with SLC2A4. In terms of tissue distribution, widely expressed.

It is found in the endoplasmic reticulum membrane. The protein resides in the cell membrane. Functionally, binds calcium (via the C2 domains) and translocates to sites of contact between the endoplasmic reticulum and the cell membrane in response to increased cytosolic calcium levels. Helps tether the endoplasmic reticulum to the cell membrane and promotes the formation of appositions between the endoplasmic reticulum and the cell membrane. Acts as an inhibitor of ADGRD1 G-protein-coupled receptor activity in absence of cytosolic calcium. Binds glycerophospholipids in a barrel-like domain and may play a role in cellular lipid transport. This Homo sapiens (Human) protein is Extended synaptotagmin-1.